The sequence spans 1124 residues: Putative DNA mismatch repair protein mutS homolog L359 (1124 aa).

S779–S786 is an ATP binding site.

The protein belongs to the DNA mismatch repair MutS family.

In terms of biological role, may be involved in DNA-mismatch repair. The sequence is that of Putative DNA mismatch repair protein mutS homolog L359 from Acanthamoeba polyphaga (Amoeba).